A 600-amino-acid polypeptide reads, in one-letter code: Integrator complex subunit 11 (600 aa).

Zn(2+)-binding residues include His68, His70, Asp72, His73, His157, and Asp178. The short motif at 68–73 (HFHLDH) is the HXHXDH motif element. Glu203 is an active-site residue. Lys381 participates in a covalent cross-link: Glycyl lysine isopeptide (Lys-Gly) (interchain with G-Cter in SUMO). His414 contributes to the Zn(2+) binding site. Residues Lys462 and Lys475 each participate in a glycyl lysine isopeptide (Lys-Gly) (interchain with G-Cter in SUMO) cross-link. The Nuclear localization signal signature appears at 469–479 (LLPEAKKPRLL).

It belongs to the metallo-beta-lactamase superfamily. RNA-metabolizing metallo-beta-lactamase-like family. INTS11 subfamily. As to quaternary structure, component of the Integrator complex, composed of core subunits INTS1, INTS2, INTS3, INTS4, INTS5, INTS6, INTS7, INTS8, INTS9/RC74, INTS10, INTS11/CPSF3L, INTS12, INTS13, INTS14 and INTS15. The core complex associates with protein phosphatase 2A subunits PPP2CA and PPP2R1A, to form the Integrator-PP2A (INTAC) complex. INTS11 is part of the RNA endonuclease subcomplex, composed of INTS4, INTS9, INTS11 and inositol hexakisphosphate (InsP6). Interacts with WDR73; interaction is required for the assembly of the RNA endonuclease subcomplex in the cytoplasm. Interacts with BRAT1; interaction is required for the assembly of the RNA endonuclease subcomplex and inhibits the endonuclease activity of INTS11 before formation of mature integrator complex. It depends on Zn(2+) as a cofactor. In terms of processing, sumoylated; sumoylation regulates its subcellular location and is required for integrator complex integrity.

Its subcellular location is the nucleus. The protein localises to the cytoplasm. The RNA endonuclease activity is inhibited by BRAT1 that forms hyrogen bond and hydrophobic interactions with the active site. In terms of biological role, RNA endonuclease component of the integrator complex, a multiprotein complex that terminates RNA polymerase II (Pol II) transcription in the promoter-proximal region of genes. The integrator complex provides a quality checkpoint during transcription elongation by driving premature transcription termination of transcripts that are unfavorably configured for transcriptional elongation: the complex terminates transcription by (1) catalyzing dephosphorylation of the C-terminal domain (CTD) of Pol II subunit POLR2A/RPB1 and SUPT5H/SPT5, (2) degrading the exiting nascent RNA transcript via endonuclease activity and (3) promoting the release of Pol II from bound DNA. The integrator complex is also involved in terminating the synthesis of non-coding Pol II transcripts, such as enhancer RNAs (eRNAs), small nuclear RNAs (snRNAs), telomerase RNAs and long non-coding RNAs (lncRNAs). Within the integrator complex, INTS11 constitutes the RNA endonuclease subunit that degrades exiting nascent RNA transcripts. Mediates recruitment of cytoplasmic dynein to the nuclear envelope, probably as component of the integrator complex. The chain is Integrator complex subunit 11 (INTS11) from Pongo abelii (Sumatran orangutan).